The sequence spans 346 residues: Putative agmatine deiminase (346 aa).

The active-site Amidino-cysteine intermediate is Cys338.

This sequence belongs to the agmatine deiminase family.

The catalysed reaction is agmatine + H2O = N-carbamoylputrescine + NH4(+). The protein is Putative agmatine deiminase of Streptomyces avermitilis (strain ATCC 31267 / DSM 46492 / JCM 5070 / NBRC 14893 / NCIMB 12804 / NRRL 8165 / MA-4680).